We begin with the raw amino-acid sequence, 122 residues long: Large ribosomal subunit protein uL14 (122 aa).

Belongs to the universal ribosomal protein uL14 family. In terms of assembly, part of the 50S ribosomal subunit. Forms a cluster with proteins L3 and L19. In the 70S ribosome, L14 and L19 interact and together make contacts with the 16S rRNA in bridges B5 and B8.

In terms of biological role, binds to 23S rRNA. Forms part of two intersubunit bridges in the 70S ribosome. The protein is Large ribosomal subunit protein uL14 of Fervidobacterium nodosum (strain ATCC 35602 / DSM 5306 / Rt17-B1).